A 552-amino-acid polypeptide reads, in one-letter code: MKALFRACRIGKVMLRYRLDTLLDGTAAERWLRLAKPFVPRISAEIVEQSRGRRLRLALQELGPIFVKFGQILSTRRDLVPQDIGDELVMLQDRVEPFEGQTARIIIETALGKSVESAFAHFDTVPLASASISQVHAATLHDGREVVVKVLRPDIEHQISDDIALLKSLATLVEHTHPNADKIRPCEIVAEIETTLAAELDLQREGANASVLRRFWEASDDIYVPEVIWSHTAEQVLTLERMYGIPSDDIALLDASGIDRKALSSKGIRVFYTQVFRDNFFHADAHSGNIWVDSDPARKSNPRFIALDFGIMGQLSQKDQYYLAENFMAIFHKDYRRIAELHVEAGWIPPHVRIEELEAAARSVCEPYFTRPLSQISLAEVLMKLFHVARRYQLTLQPQLILLQKTLLNIEGVGRQLDPELDIWVVARPVLERILRARYSPRHALKELNKRLPEIMTHAPDTPRLIHTWLVQQVESRKQNDVYLQQIRALAMTLQGLQRRVVNAIVGSGLLVAAAVLYGLHPDGLYLGAIPVWSLISGCVGALALFSAWWRS.

The Protein kinase domain maps to His121–Ala504. ATP contacts are provided by residues Leu127 to Val135 and Lys149. Asp284 serves as the catalytic Proton acceptor. The next 2 helical transmembrane spans lie at Val501 to His521 and Tyr526 to Phe546.

It belongs to the ABC1 family. UbiB subfamily.

The protein localises to the cell inner membrane. It functions in the pathway cofactor biosynthesis; ubiquinone biosynthesis [regulation]. Is probably a protein kinase regulator of UbiI activity which is involved in aerobic coenzyme Q (ubiquinone) biosynthesis. The protein is Probable protein kinase UbiB of Xylella fastidiosa (strain 9a5c).